The sequence spans 142 residues: Large ribosomal subunit protein uL11 (142 aa).

It belongs to the universal ribosomal protein uL11 family. As to quaternary structure, part of the ribosomal stalk of the 50S ribosomal subunit. Interacts with L10 and the large rRNA to form the base of the stalk. L10 forms an elongated spine to which L12 dimers bind in a sequential fashion forming a multimeric L10(L12)X complex. Post-translationally, one or more lysine residues are methylated.

Its function is as follows. Forms part of the ribosomal stalk which helps the ribosome interact with GTP-bound translation factors. The chain is Large ribosomal subunit protein uL11 from Vibrio cholerae serotype O1 (strain ATCC 39541 / Classical Ogawa 395 / O395).